Here is a 395-residue protein sequence, read N- to C-terminus: NAD(P)H-quinone oxidoreductase subunit H, chloroplastic (395 aa).

This sequence belongs to the complex I 49 kDa subunit family. As to quaternary structure, NDH is composed of at least 16 different subunits, 5 of which are encoded in the nucleus.

The protein localises to the plastid. Its subcellular location is the chloroplast thylakoid membrane. The enzyme catalyses a plastoquinone + NADH + (n+1) H(+)(in) = a plastoquinol + NAD(+) + n H(+)(out). The catalysed reaction is a plastoquinone + NADPH + (n+1) H(+)(in) = a plastoquinol + NADP(+) + n H(+)(out). NDH shuttles electrons from NAD(P)H:plastoquinone, via FMN and iron-sulfur (Fe-S) centers, to quinones in the photosynthetic chain and possibly in a chloroplast respiratory chain. The immediate electron acceptor for the enzyme in this species is believed to be plastoquinone. Couples the redox reaction to proton translocation, and thus conserves the redox energy in a proton gradient. This chain is NAD(P)H-quinone oxidoreductase subunit H, chloroplastic, found in Citrus sinensis (Sweet orange).